A 259-amino-acid polypeptide reads, in one-letter code: Protein CDI (259 aa).

The stretch at 236–259 (FADLWLNEMEEYNKENKKEADNAK) forms a coiled coil.

Mostly expressed in pollen grains and pollen tubes, and, at low levels, in seedlings, roots, stems, leaves, flowers and siliques.

It is found in the cytoplasm. The protein resides in the cytosol. Probable nucleotide-diphospho-sugar transferase required for pollen germination and tube growth. The protein is Protein CDI of Arabidopsis thaliana (Mouse-ear cress).